The following is a 296-amino-acid chain: 5'-3' exonuclease (296 aa).

The 5'-3' exonuclease domain maps to 175-262; it reads VMPKALIDIK…VPLACTLKDA (88 aa).

5'-3' exonuclease acting preferentially on double-stranded DNA. This chain is 5'-3' exonuclease (ypcP), found in Bacillus subtilis (strain 168).